The following is a 517-amino-acid chain: Protein IQ-DOMAIN 13 (517 aa).

Residues 1 to 11 (MGKKGSWFSAI) form a calmodulin-binding region. Disordered stretches follow at residues 1 to 60 (MGKK…FLPI) and 81 to 147 (VFRP…PRAV). Residues 40 to 49 (KKKKGFGKKL) show a composition bias toward basic residues. A compositionally biased stretch (polar residues) spans 89–99 (DRANSSSTSVA). Positions 134 to 144 (PKPPSPKPPSP) are enriched in pro residues. IQ domains are found at residues 168 to 196 (KNAY…GLVR) and 197 to 218 (LQGV…KYMQ). 2 disordered regions span residues 324-407 (QPFR…LTSC) and 425-452 (KLRA…SSFP). The segment covering 328 to 342 (LTPTRPSLSPQPQSS) has biased composition (low complexity). Residues 343-367 (NQNHFRLNNSFDTSTPNSSKSTFVT) show a composition bias toward polar residues. Basic and acidic residues predominate over residues 432-448 (PKERMDRTPVSTNEKRR).

Belongs to the IQD family. As to quaternary structure, binds to multiple calmodulin (CaM) in the presence of Ca(2+) and CaM-like proteins. Expressed in vessels of roots, cotyledons and leaves, as well as in trichomes.

Its subcellular location is the cell membrane. The protein localises to the cytoplasm. The protein resides in the cytoskeleton. May be involved in cooperative interactions with calmodulins or calmodulin-like proteins. Recruits calmodulin proteins to microtubules, thus being a potential scaffold in cellular signaling and trafficking. Regulates the formation of oval xylem secondary cell-wall deposition pits through microtubule-dependent lateral inhibition of Rho GTPase domains, thus confining the area of active ROP domains within the lattice of the cortical microtubules. May associate with nucleic acids and regulate gene expression at the transcriptional or post-transcriptional level. This is Protein IQ-DOMAIN 13 from Arabidopsis thaliana (Mouse-ear cress).